The primary structure comprises 353 residues: S-adenosylmethionine:tRNA ribosyltransferase-isomerase (353 aa).

Belongs to the QueA family. Monomer.

The protein localises to the cytoplasm. It catalyses the reaction 7-aminomethyl-7-carbaguanosine(34) in tRNA + S-adenosyl-L-methionine = epoxyqueuosine(34) in tRNA + adenine + L-methionine + 2 H(+). The protein operates within tRNA modification; tRNA-queuosine biosynthesis. Functionally, transfers and isomerizes the ribose moiety from AdoMet to the 7-aminomethyl group of 7-deazaguanine (preQ1-tRNA) to give epoxyqueuosine (oQ-tRNA). The chain is S-adenosylmethionine:tRNA ribosyltransferase-isomerase from Rickettsia bellii (strain OSU 85-389).